Here is a 686-residue protein sequence, read N- to C-terminus: ATP-dependent zinc metalloprotease FtsH 1 (686 aa).

At 1 to 33 (MCFCIVSSPEAMHSNADSPSSGPGLQPVWTTLR) the chain is on the cytoplasmic side. Residues 34–54 (SPYVFWIGGAILLALLVHLGI) traverse the membrane as a helical segment. Residues 55-164 (KWQQASAPVR…TFAATQESDW (110 aa)) are Periplasmic-facing. A helical membrane pass occupies residues 165–185 (VGTLLLWGLPLGLIVGIWLFF). Residues 186-686 (MRRMATGGRE…AEGASPSSQG (501 aa)) are Cytoplasmic-facing. 257 to 264 (GPPGTGKT) contributes to the ATP binding site. His-479 is a binding site for Zn(2+). The active site involves Glu-480. The Zn(2+) site is built by His-483 and Asp-555. The interval 661 to 686 (YAWLKEGDGTSRNSASAEGASPSSQG) is disordered. Residues 670-686 (TSRNSASAEGASPSSQG) are compositionally biased toward polar residues.

It in the central section; belongs to the AAA ATPase family. The protein in the C-terminal section; belongs to the peptidase M41 family. In terms of assembly, homohexamer. It depends on Zn(2+) as a cofactor.

The protein resides in the cell inner membrane. Functionally, acts as a processive, ATP-dependent zinc metallopeptidase for both cytoplasmic and membrane proteins. Plays a role in the quality control of integral membrane proteins. This Salinibacter ruber (strain M8) protein is ATP-dependent zinc metalloprotease FtsH 1.